The chain runs to 572 residues: Proline--tRNA ligase (572 aa).

The protein belongs to the class-II aminoacyl-tRNA synthetase family. ProS type 1 subfamily. In terms of assembly, homodimer.

The protein resides in the cytoplasm. It catalyses the reaction tRNA(Pro) + L-proline + ATP = L-prolyl-tRNA(Pro) + AMP + diphosphate. Catalyzes the attachment of proline to tRNA(Pro) in a two-step reaction: proline is first activated by ATP to form Pro-AMP and then transferred to the acceptor end of tRNA(Pro). As ProRS can inadvertently accommodate and process non-cognate amino acids such as alanine and cysteine, to avoid such errors it has two additional distinct editing activities against alanine. One activity is designated as 'pretransfer' editing and involves the tRNA(Pro)-independent hydrolysis of activated Ala-AMP. The other activity is designated 'posttransfer' editing and involves deacylation of mischarged Ala-tRNA(Pro). The misacylated Cys-tRNA(Pro) is not edited by ProRS. This is Proline--tRNA ligase from Cronobacter sakazakii (strain ATCC BAA-894) (Enterobacter sakazakii).